A 457-amino-acid chain; its full sequence is UDP-N-acetylmuramoyl-tripeptide--D-alanyl-D-alanine ligase (457 aa).

ATP is bound at residue 113 to 119 (GSNGKTT).

Belongs to the MurCDEF family. MurF subfamily.

Its subcellular location is the cytoplasm. It carries out the reaction D-alanyl-D-alanine + UDP-N-acetyl-alpha-D-muramoyl-L-alanyl-gamma-D-glutamyl-meso-2,6-diaminopimelate + ATP = UDP-N-acetyl-alpha-D-muramoyl-L-alanyl-gamma-D-glutamyl-meso-2,6-diaminopimeloyl-D-alanyl-D-alanine + ADP + phosphate + H(+). The protein operates within cell wall biogenesis; peptidoglycan biosynthesis. Its function is as follows. Involved in cell wall formation. Catalyzes the final step in the synthesis of UDP-N-acetylmuramoyl-pentapeptide, the precursor of murein. The sequence is that of UDP-N-acetylmuramoyl-tripeptide--D-alanyl-D-alanine ligase from Bacillus subtilis (strain 168).